A 615-amino-acid polypeptide reads, in one-letter code: Zinc finger protein 653 (615 aa).

Disordered regions lie at residues 1–46 (MAER…ARRR), 93–115 (RSGRHGKPWEQVPKKPKRKKRRR), and 174–235 (PLSD…SGLI). Residues 7-25 (EPGAEAEAGAGGEAAAEEG) show a composition bias toward low complexity. Residues 106 to 115 (KKPKRKKRRR) show a composition bias toward basic residues. Low complexity-rich tracts occupy residues 192 to 203 (GSSDSSSSGSSS) and 212 to 232 (QPAKASAAAAALTPASPTGSS). 5 consecutive C2H2-type zinc fingers follow at residues 467-492 (FHCPYEGCSQVYVALSSFQNHVNLVH), 498-522 (KVCPHPGCGKKFYLSNHLRRHMIIH), 528-550 (FTCETCGKSFKRKNHLEVHRRTH), 556-578 (LQCEICGYQCRQRASLNWHMKKH), and 586-609 (FTCDRCGKRFEKLDSVKFHTLKSH).

It belongs to the krueppel C2H2-type zinc-finger protein family. In terms of assembly, interacts with NR5A1. As to expression, highly expressed in testis and spleen. Moderately expressed in lung, adrenal gland, uterus, and ovary. Very low expression in pancreas, heart, skeletal muscle, adipose tissue, kidney, and liver.

It is found in the nucleus. In terms of biological role, transcriptional repressor. May repress NR5A1, PPARG, NR1H3, NR4A2, ESR1 and NR3C1 transcriptional activity. This Mus musculus (Mouse) protein is Zinc finger protein 653 (Znf653).